We begin with the raw amino-acid sequence, 321 residues long: Phospho-N-acetylmuramoyl-pentapeptide-transferase (321 aa).

10 helical membrane-spanning segments follow: residues 1–21 (MIFI…PILI), 50–70 (MGGL…IIFV), 76–96 (IILL…DDYI), 112–132 (FLAQ…FHLV), 140–160 (IPFV…IVFW), 176–196 (GLAT…SYML), 200–220 (AIGI…PYNL), 225–245 (VFMG…ISIM), 250–270 (LSLI…MLQV), and 300–320 (VVTV…WIGV).

It belongs to the glycosyltransferase 4 family. MraY subfamily. The cofactor is Mg(2+).

The protein resides in the cell membrane. The catalysed reaction is UDP-N-acetyl-alpha-D-muramoyl-L-alanyl-gamma-D-glutamyl-L-lysyl-D-alanyl-D-alanine + di-trans,octa-cis-undecaprenyl phosphate = Mur2Ac(oyl-L-Ala-gamma-D-Glu-L-Lys-D-Ala-D-Ala)-di-trans,octa-cis-undecaprenyl diphosphate + UMP. It participates in cell wall biogenesis; peptidoglycan biosynthesis. Functionally, catalyzes the initial step of the lipid cycle reactions in the biosynthesis of the cell wall peptidoglycan: transfers peptidoglycan precursor phospho-MurNAc-pentapeptide from UDP-MurNAc-pentapeptide onto the lipid carrier undecaprenyl phosphate, yielding undecaprenyl-pyrophosphoryl-MurNAc-pentapeptide, known as lipid I. The protein is Phospho-N-acetylmuramoyl-pentapeptide-transferase of Staphylococcus epidermidis (strain ATCC 35984 / DSM 28319 / BCRC 17069 / CCUG 31568 / BM 3577 / RP62A).